The chain runs to 83 residues: Cytochrome b559 subunit alpha (83 aa).

A helical membrane pass occupies residues 21 to 35 (VIHSITIPSLFIAGW). Residue H23 coordinates heme.

This sequence belongs to the PsbE/PsbF family. As to quaternary structure, heterodimer of an alpha subunit and a beta subunit. PSII is composed of 1 copy each of membrane proteins PsbA, PsbB, PsbC, PsbD, PsbE, PsbF, PsbH, PsbI, PsbJ, PsbK, PsbL, PsbM, PsbT, PsbX, PsbY, PsbZ, Psb30/Ycf12, at least 3 peripheral proteins of the oxygen-evolving complex and a large number of cofactors. It forms dimeric complexes. Heme b is required as a cofactor.

It localises to the plastid. The protein resides in the chloroplast thylakoid membrane. Its function is as follows. This b-type cytochrome is tightly associated with the reaction center of photosystem II (PSII). PSII is a light-driven water:plastoquinone oxidoreductase that uses light energy to abstract electrons from H(2)O, generating O(2) and a proton gradient subsequently used for ATP formation. It consists of a core antenna complex that captures photons, and an electron transfer chain that converts photonic excitation into a charge separation. The protein is Cytochrome b559 subunit alpha of Oenothera berteroana (Bertero's evening primrose).